We begin with the raw amino-acid sequence, 804 residues long: DEP domain-containing protein 1A (804 aa).

Residues phenylalanine 24–alanine 108 form the DEP domain. The Rho-GAP domain occupies aspartate 282–isoleucine 322. Phosphoserine is present on serine 513. Positions alanine 592–cysteine 647 are interaction with ZNF224. A coiled-coil region spans residues glutamate 726–glutamine 760.

In terms of assembly, can form dimers. Interacts with ZNF224.

It localises to the nucleus. May be involved in transcriptional regulation as a transcriptional corepressor. The DEPDC1A-ZNF224 complex may play a critical role in bladder carcinogenesis by repressing the transcription of the A20 gene, leading to transport of NF-KB protein into the nucleus, resulting in suppression of apoptosis of bladder cancer cells. This Mus musculus (Mouse) protein is DEP domain-containing protein 1A (Depdc1a).